Consider the following 518-residue polypeptide: MADADEGFGLAHTPLEPDAKDLPCDSKPESALGAPSKSPSSPQAAFTQQGMEGIKVFLHERELWLKFHEVGTEMIITKAGRRMFPSYKVKVTGLNPKTKYILLMDIVPADDHRYKFADNKWSVTGKAEPAMPGRLYVHPDSPATGAHWMRQLVSFQKLKLTNNHLDPFGHIILNSMHKYQPRLHIVKADENNGFGSKNTAFCTHVFPETAFIAVTSYQNHKITQLKIENNPFAKGFRGSDDMELHRMSRMQSKEYPVVPRSTVRQKVASNHSPFSSESRALSTSSNLGSQYQCENGVSGPSQDLLPPPNPYPLPQEHSQIYHCTKRKEEECSTTDHPYKKPYMETSPSEEDSFYRSSYPQQQGLGASYRTESAQRQACMYASSAPPSEPVPSLEDISCNTWPSMPSYSSCTVTTVQPMDRLPYQHFSAHFTSGPLVPRLAGMANHGSPQLGEGMFQHQTSVAHQPVVRQCGPQTGLQSPGTLQPPEFLYSHGVPRTLSPHQYHSVHGVGMVPEWSDNS.

Residues 1–46 (MADADEGFGLAHTPLEPDAKDLPCDSKPESALGAPSKSPSSPQAAF) form a disordered region. A compositionally biased stretch (basic and acidic residues) spans 15-28 (LEPDAKDLPCDSKP). Positions 34 to 45 (APSKSPSSPQAA) are enriched in low complexity. A DNA-binding region (T-box) is located at residues 58–238 (LHERELWLKF…NNPFAKGFRG (181 aa)). The interval 250-356 (MQSKEYPVVP…PSEEDSFYRS (107 aa)) is disordered. Residues 262-301 (TVRQKVASNHSPFSSESRALSTSSNLGSQYQCENGVSGPS) are compositionally biased toward polar residues. Lys-339 carries the post-translational modification N6-acetyllysine.

As to quaternary structure, monomer. Homodimer (via the T-box); binds DNA as homodimer. Interacts (via the T-box) with NKX2-5 (via the homeobox); this complex binds DNA. Interacts with GATA4. Interacts with KAT2A and KAT2B. In terms of processing, acetylation at Lys-339 by KAT2A and KAT2B promotes nuclear retention.

The protein resides in the nucleus. Its subcellular location is the cytoplasm. In terms of biological role, DNA-binding protein that regulates the transcription of several genes and is involved in heart development and limb pattern formation. Binds to the core DNA motif of NPPA promoter. The chain is T-box transcription factor TBX5 (TBX5) from Homo sapiens (Human).